The following is a 740-amino-acid chain: Vertnin (740 aa).

Disordered regions lie at residues Glu485 to Ile506, Pro560 to Val616, and Thr653 to Gly673. Over residues Gln578–Pro604 the composition is skewed to basic and acidic residues. Polar residues predominate over residues Thr653–Leu667.

The protein belongs to the vertnin family.

It is found in the nucleus. In terms of biological role, acts as a transcription factor that regulates development of thoracic vertebrae. The protein is Vertnin (Vrtn) of Mus musculus (Mouse).